A 176-amino-acid polypeptide reads, in one-letter code: Large ribosomal subunit protein uL16 (176 aa).

Belongs to the universal ribosomal protein uL16 family.

The protein is Large ribosomal subunit protein uL16 of Thermoplasma volcanium (strain ATCC 51530 / DSM 4299 / JCM 9571 / NBRC 15438 / GSS1).